We begin with the raw amino-acid sequence, 824 residues long: Leucine--tRNA ligase (824 aa).

Residues 42–52 carry the 'HIGH' region motif; the sequence is PYPSGRIHMGH. Residues 581 to 585 carry the 'KMSKS' region motif; sequence KMSKS. An ATP-binding site is contributed by Lys-584.

It belongs to the class-I aminoacyl-tRNA synthetase family.

Its subcellular location is the cytoplasm. It carries out the reaction tRNA(Leu) + L-leucine + ATP = L-leucyl-tRNA(Leu) + AMP + diphosphate. The protein is Leucine--tRNA ligase of Geobacter sulfurreducens (strain ATCC 51573 / DSM 12127 / PCA).